A 366-amino-acid chain; its full sequence is Cytochrome c mitochondrial import factor CYC2 (366 aa).

The transit peptide at 1-50 (MLWKNYVLSSSRITRRLHKSPRKSSFSKNFFITGCLLTVGAVSSYLTYRY) directs the protein to the mitochondrion. The region spanning 63-184 (SYFVKYKISH…RGPFIDYEFP (122 aa)) is the FAD-binding FR-type domain.

It depends on FAD as a cofactor.

The protein resides in the mitochondrion inner membrane. Functionally, redox component that participates in c-type cytochrome biogenesis in the mitochondrial intermembrane space. May play a role in the reduction of heme prior to its ligation to apocytochrome c by cytochrome c heme lyase. Has oxidoreductase activity in vitro. The chain is Cytochrome c mitochondrial import factor CYC2 (CYC2) from Saccharomyces cerevisiae (strain ATCC 204508 / S288c) (Baker's yeast).